The primary structure comprises 462 residues: L-seryl-tRNA(Sec) selenium transferase (462 aa).

K292 is subject to N6-(pyridoxal phosphate)lysine.

This sequence belongs to the SelA family. Pyridoxal 5'-phosphate is required as a cofactor.

The protein localises to the cytoplasm. It catalyses the reaction L-seryl-tRNA(Sec) + selenophosphate + H(+) = L-selenocysteinyl-tRNA(Sec) + phosphate. It functions in the pathway aminoacyl-tRNA biosynthesis; selenocysteinyl-tRNA(Sec) biosynthesis; selenocysteinyl-tRNA(Sec) from L-seryl-tRNA(Sec) (bacterial route): step 1/1. Converts seryl-tRNA(Sec) to selenocysteinyl-tRNA(Sec) required for selenoprotein biosynthesis. This chain is L-seryl-tRNA(Sec) selenium transferase, found in Geotalea daltonii (strain DSM 22248 / JCM 15807 / FRC-32) (Geobacter daltonii).